The chain runs to 455 residues: L-serine dehydratase (455 aa).

It belongs to the iron-sulfur dependent L-serine dehydratase family. [4Fe-4S] cluster is required as a cofactor.

It carries out the reaction L-serine = pyruvate + NH4(+). It participates in carbohydrate biosynthesis; gluconeogenesis. This is L-serine dehydratase (sdaA) from Streptomyces coelicolor (strain ATCC BAA-471 / A3(2) / M145).